Reading from the N-terminus, the 430-residue chain is Serine--tRNA ligase (430 aa).

The tract at residues 103-127 (LPNIPDDDVPDGRDENDNQEVSRWG) is disordered. 237-239 (TAE) serves as a coordination point for L-serine. 268–270 (RSE) serves as a coordination point for ATP. L-serine is bound at residue Glu-291. ATP is bound at residue 355 to 358 (EISS). Ser-391 contacts L-serine.

Belongs to the class-II aminoacyl-tRNA synthetase family. Type-1 seryl-tRNA synthetase subfamily. As to quaternary structure, homodimer. The tRNA molecule binds across the dimer.

It localises to the cytoplasm. The enzyme catalyses tRNA(Ser) + L-serine + ATP = L-seryl-tRNA(Ser) + AMP + diphosphate + H(+). It catalyses the reaction tRNA(Sec) + L-serine + ATP = L-seryl-tRNA(Sec) + AMP + diphosphate + H(+). The protein operates within aminoacyl-tRNA biosynthesis; selenocysteinyl-tRNA(Sec) biosynthesis; L-seryl-tRNA(Sec) from L-serine and tRNA(Sec): step 1/1. Functionally, catalyzes the attachment of serine to tRNA(Ser). Is also able to aminoacylate tRNA(Sec) with serine, to form the misacylated tRNA L-seryl-tRNA(Sec), which will be further converted into selenocysteinyl-tRNA(Sec). This is Serine--tRNA ligase from Sodalis glossinidius (strain morsitans).